The following is a 293-amino-acid chain: Adenylyl-sulfate kinase 2, chloroplastic (293 aa).

The N-terminal 59 residues, 1-59, are a transit peptide targeting the chloroplast; it reads MEGLAIRASRPSVFCSIPGLGGDSHRKPPSDGFLKLPASSIPADSRKLVANSTSFHPIS. Residue 122 to 130 coordinates ATP; the sequence is GLSGSGKST. Residues Asp152, Arg155, Arg169, Asn172, 195–196, and Gly245 contribute to the substrate site; that span reads IS. Ser196 serves as the catalytic Phosphoserine intermediate.

The protein belongs to the APS kinase family. Interacts with APK1. Expressed in root vasculature, root tips, leaf epidermal cells and funiculus of developing seeds.

The protein resides in the plastid. The protein localises to the chloroplast. The catalysed reaction is adenosine 5'-phosphosulfate + ATP = 3'-phosphoadenylyl sulfate + ADP + H(+). It functions in the pathway sulfur metabolism; hydrogen sulfide biosynthesis; sulfite from sulfate: step 2/3. Its function is as follows. Catalyzes the synthesis of activated sulfate. Essential for plant reproduction and viability. Required for the production of glucosinolates. The chain is Adenylyl-sulfate kinase 2, chloroplastic (APK2) from Arabidopsis thaliana (Mouse-ear cress).